A 150-amino-acid chain; its full sequence is Large ribosomal subunit protein bL9 (150 aa).

This sequence belongs to the bacterial ribosomal protein bL9 family.

Functionally, binds to the 23S rRNA. The protein is Large ribosomal subunit protein bL9 of Streptococcus pyogenes serotype M6 (strain ATCC BAA-946 / MGAS10394).